Here is a 76-residue protein sequence, read N- to C-terminus: Omega/Kappa-hexatoxin-Hv1h (76 aa).

The signal sequence occupies residues 1-22 (MNTATGFIVLLVLATILGGIEA). A propeptide spanning residues 23-35 (GESHMRKDAMGRV) is cleaved from the precursor. 3 disulfide bridges follow: cysteine 40–cysteine 55, cysteine 47–cysteine 60, and cysteine 54–cysteine 74.

The protein belongs to the neurotoxin 08 (Shiva) family. 02 (omega/kappa toxin) subfamily. In terms of tissue distribution, expressed by the venom gland.

The protein resides in the secreted. Toxin that may inhibit ion channels. The polypeptide is Omega/Kappa-hexatoxin-Hv1h (Hadronyche versuta (Blue mountains funnel-web spider)).